Here is a 189-residue protein sequence, read N- to C-terminus: Penicillin-binding protein activator LpoB (189 aa).

The first 16 residues, 1 to 16 (MRRILFVALSVMFLAG), serve as a signal peptide directing secretion. Cysteine 17 carries N-palmitoyl cysteine lipidation. The S-diacylglycerol cysteine moiety is linked to residue cysteine 17. The disordered stretch occupies residues 18–52 (PSLPPEQPEPPTPVVPVTPSEKPTPPSEKVPEPPK). Residues 19–45 (SLPPEQPEPPTPVVPVTPSEKPTPPSE) show a composition bias toward pro residues.

This sequence belongs to the LpoB family. In terms of assembly, interacts with PBP1b.

It localises to the cell outer membrane. Functionally, regulator of peptidoglycan synthesis that is essential for the function of penicillin-binding protein 1B (PBP1b). The sequence is that of Penicillin-binding protein activator LpoB from Photorhabdus laumondii subsp. laumondii (strain DSM 15139 / CIP 105565 / TT01) (Photorhabdus luminescens subsp. laumondii).